Here is a 437-residue protein sequence, read N- to C-terminus: 3-deoxy-D-manno-octulosonic acid transferase (437 aa).

A helical; Signal-anchor membrane pass occupies residues 16 to 36; that stretch reads VVLVCAFVIALPKLLYKMLVY. The Proton acceptor role is filled by Glu70. CMP-binding positions include 279-280, 319-321, and 346-349; these read PR, IGL, and NLLE.

It belongs to the glycosyltransferase group 1 family. Glycosyltransferase 30 subfamily.

The protein resides in the cell inner membrane. The catalysed reaction is lipid IVA (E. coli) + CMP-3-deoxy-beta-D-manno-octulosonate = alpha-Kdo-(2-&gt;6)-lipid IVA (E. coli) + CMP + H(+). It carries out the reaction alpha-Kdo-(2-&gt;6)-lipid IVA (E. coli) + CMP-3-deoxy-beta-D-manno-octulosonate = alpha-Kdo-(2-&gt;4)-alpha-Kdo-(2-&gt;6)-lipid IVA (E. coli) + CMP + H(+). The enzyme catalyses alpha-Kdo-(2-&gt;4)-alpha-Kdo-(2-&gt;6)-lipid IVA (E. coli) + CMP-3-deoxy-beta-D-manno-octulosonate = alpha-Kdo-(2-&gt;8)-alpha-Kdo-(2-&gt;4)-alpha-Kdo-(2-&gt;6)-lipid IVA (E. coli) + CMP + H(+). It functions in the pathway bacterial outer membrane biogenesis; LPS core biosynthesis. In terms of biological role, involved in lipopolysaccharide (LPS) biosynthesis. Catalyzes the transfer of three 3-deoxy-D-manno-octulosonate (Kdo) residues from CMP-Kdo to lipid IV(A), the tetraacyldisaccharide-1,4'-bisphosphate precursor of lipid A. Thus generates the genus-specific LPS epitope of Chlamydia, composed of the trisaccharide alpha-Kdo-(2-&gt;8)-alpha-Kdo-(2-&gt;4)-alpha-Kdo. The protein is 3-deoxy-D-manno-octulosonic acid transferase (waaA) of Chlamydia pneumoniae (Chlamydophila pneumoniae).